The following is a 361-amino-acid chain: Alanine racemase 2 (361 aa).

Residue K30 is the Proton acceptor; specific for D-alanine of the active site. The residue at position 30 (K30) is an N6-(pyridoxal phosphate)lysine. R122 serves as a coordination point for substrate. Catalysis depends on Y256, which acts as the Proton acceptor; specific for L-alanine. Residue M303 participates in substrate binding.

Belongs to the alanine racemase family. It depends on pyridoxal 5'-phosphate as a cofactor.

The enzyme catalyses L-alanine = D-alanine. It functions in the pathway amino-acid biosynthesis; D-alanine biosynthesis; D-alanine from L-alanine: step 1/1. Its function is as follows. Catalyzes the interconversion of L-alanine and D-alanine. May also act on other amino acids. This is Alanine racemase 2 (alr2) from Staphylococcus aureus (strain COL).